A 318-amino-acid polypeptide reads, in one-letter code: Methionyl-tRNA formyltransferase (318 aa).

A (6S)-5,6,7,8-tetrahydrofolate-binding site is contributed by 112–115; that stretch reads SLLP.

This sequence belongs to the Fmt family.

It catalyses the reaction L-methionyl-tRNA(fMet) + (6R)-10-formyltetrahydrofolate = N-formyl-L-methionyl-tRNA(fMet) + (6S)-5,6,7,8-tetrahydrofolate + H(+). Its function is as follows. Attaches a formyl group to the free amino group of methionyl-tRNA(fMet). The formyl group appears to play a dual role in the initiator identity of N-formylmethionyl-tRNA by promoting its recognition by IF2 and preventing the misappropriation of this tRNA by the elongation apparatus. The chain is Methionyl-tRNA formyltransferase from Citrifermentans bemidjiense (strain ATCC BAA-1014 / DSM 16622 / JCM 12645 / Bem) (Geobacter bemidjiensis).